We begin with the raw amino-acid sequence, 396 residues long: Pyruvate dehydrogenase E1 component subunit alpha type I, mitochondrial (396 aa).

The transit peptide at Met1–Leu25 directs the protein to the mitochondrion. Pyruvate-binding residues include His88, Tyr114, Arg115, Gly153, Gly161, Val163, Asp192, Gly193, Ala194, Asn221, and Tyr223. Thiamine diphosphate contacts are provided by Tyr114 and Arg115. Residues Gly161, Val163, Asp192, Gly193, Ala194, and Asn221 each contribute to the thiamine diphosphate site. Asp192 is a Mg(2+) binding site. The Mg(2+) site is built by Asn221 and Tyr223. His288 contacts thiamine diphosphate. Phosphoserine occurs at positions 289 and 296.

As to quaternary structure, heterotetramer of two PDHA1 and two PDHB subunits. The heterotetramer interacts with DLAT, and is part of the multimeric pyruvate dehydrogenase complex that contains multiple copies of pyruvate dehydrogenase (E1), dihydrolipoamide acetyltransferase (DLAT, E2) and lipoamide dehydrogenase (DLD, E3). Thiamine diphosphate is required as a cofactor. Requires Mg(2+) as cofactor.

Its subcellular location is the mitochondrion matrix. It catalyses the reaction N(6)-[(R)-lipoyl]-L-lysyl-[protein] + pyruvate + H(+) = N(6)-[(R)-S(8)-acetyldihydrolipoyl]-L-lysyl-[protein] + CO2. Pyruvate dehydrogenase activity is inhibited by phosphorylation of PDHA1; it is reactivated by dephosphorylation. The pyruvate dehydrogenase complex catalyzes the overall conversion of pyruvate to acetyl-CoA and CO(2), and thereby links the glycolytic pathway to the tricarboxylic cycle. In Ascaris suum (Pig roundworm), this protein is Pyruvate dehydrogenase E1 component subunit alpha type I, mitochondrial.